Reading from the N-terminus, the 473-residue chain is 3-isopropylmalate dehydratase large subunit 2 (473 aa).

[4Fe-4S] cluster contacts are provided by Cys350, Cys410, and Cys413.

It belongs to the aconitase/IPM isomerase family. LeuC type 1 subfamily. Heterodimer of LeuC and LeuD. Requires [4Fe-4S] cluster as cofactor.

It carries out the reaction (2R,3S)-3-isopropylmalate = (2S)-2-isopropylmalate. The protein operates within amino-acid biosynthesis; L-leucine biosynthesis; L-leucine from 3-methyl-2-oxobutanoate: step 2/4. Catalyzes the isomerization between 2-isopropylmalate and 3-isopropylmalate, via the formation of 2-isopropylmaleate. In Salmonella typhimurium (strain LT2 / SGSC1412 / ATCC 700720), this protein is 3-isopropylmalate dehydratase large subunit 2.